A 78-amino-acid polypeptide reads, in one-letter code: Small ribosomal subunit protein bS18 (78 aa).

This sequence belongs to the bacterial ribosomal protein bS18 family. In terms of assembly, part of the 30S ribosomal subunit. Forms a tight heterodimer with protein bS6.

Its function is as follows. Binds as a heterodimer with protein bS6 to the central domain of the 16S rRNA, where it helps stabilize the platform of the 30S subunit. The polypeptide is Small ribosomal subunit protein bS18 (Nocardioides sp. (strain ATCC BAA-499 / JS614)).